Here is a 229-residue protein sequence, read N- to C-terminus: Phosphoglycolate phosphatase (229 aa).

D18 serves as the catalytic Nucleophile. D18, D20, and D176 together coordinate Mg(2+).

The protein belongs to the HAD-like hydrolase superfamily. CbbY/CbbZ/Gph/YieH family. Requires Mg(2+) as cofactor.

It catalyses the reaction 2-phosphoglycolate + H2O = glycolate + phosphate. It functions in the pathway organic acid metabolism; glycolate biosynthesis; glycolate from 2-phosphoglycolate: step 1/1. In terms of biological role, specifically catalyzes the dephosphorylation of 2-phosphoglycolate. Is involved in the dissimilation of the intracellular 2-phosphoglycolate formed during the DNA repair of 3'-phosphoglycolate ends, a major class of DNA lesions induced by oxidative stress. In Xylella fastidiosa (strain Temecula1 / ATCC 700964), this protein is Phosphoglycolate phosphatase.